The following is an 85-amino-acid chain: U4-theraphotoxin-Hhn1a (85 aa).

A signal peptide spans 1-22; it reads MKVTLIAILTCAAVLVLHTTAA. Positions 23–48 are excised as a propeptide; it reads EEFEAESQLMEVGMPDTELAAVDEER. Disulfide bonds link Cys-52–Cys-66, Cys-56–Cys-77, and Cys-71–Cys-82.

The protein belongs to the neurotoxin 12 (Hwtx-2) family. 02 (Hwtx-2) subfamily. In terms of assembly, monomer. In terms of tissue distribution, expressed by the venom gland.

It localises to the secreted. Neurotoxin active on both insects and mammals. In Cyriopagopus hainanus (Chinese bird spider), this protein is U4-theraphotoxin-Hhn1a.